A 790-amino-acid polypeptide reads, in one-letter code: Phenylalanine--tRNA ligase beta subunit (790 aa).

A tRNA-binding domain is found at 40–149 (AEKVSGVVVG…IDAPVGTDIN (110 aa)). Residues 402–479 (NKQIKINLSI…RIYGYSKLPE (78 aa)) enclose the B5 domain. Positions 457, 463, 466, and 467 each coordinate Mg(2+). Residues 698–789 (SKYPSVSRDI…LKTKFNIEQR (92 aa)) enclose the FDX-ACB domain.

This sequence belongs to the phenylalanyl-tRNA synthetase beta subunit family. Type 1 subfamily. Tetramer of two alpha and two beta subunits. It depends on Mg(2+) as a cofactor.

The protein localises to the cytoplasm. It catalyses the reaction tRNA(Phe) + L-phenylalanine + ATP = L-phenylalanyl-tRNA(Phe) + AMP + diphosphate + H(+). The polypeptide is Phenylalanine--tRNA ligase beta subunit (Francisella tularensis subsp. tularensis (strain SCHU S4 / Schu 4)).